We begin with the raw amino-acid sequence, 940 residues long: Beta-mannosidase A (940 aa).

The signal sequence occupies residues 1-21 (MHFHGIATQAVLASNITTGSG). Residues N15, N39, N79, N245, N314, N321, and N344 are each glycosylated (N-linked (GlcNAc...) asparagine). E476 serves as the catalytic Proton donor. N-linked (GlcNAc...) asparagine glycans are attached at residues N534, N605, N626, N653, N733, N761, and N785.

The protein belongs to the glycosyl hydrolase 2 family. Beta-mannosidase A subfamily. As to quaternary structure, homodimer.

Its subcellular location is the secreted. The catalysed reaction is Hydrolysis of terminal, non-reducing beta-D-mannose residues in beta-D-mannosides.. It participates in glycan metabolism; N-glycan degradation. Functionally, exoglycosidase that cleaves the single beta-linked mannose residue from the non-reducing end of beta-mannosidic oligosaccharides of various complexity and length. Involved in the degradation of polymeric mannan and galactomannan. The polypeptide is Beta-mannosidase A (mndA) (Emericella nidulans (strain FGSC A4 / ATCC 38163 / CBS 112.46 / NRRL 194 / M139) (Aspergillus nidulans)).